A 302-amino-acid polypeptide reads, in one-letter code: Quinolinate synthase (302 aa).

Positions 24 and 41 each coordinate iminosuccinate. Cysteine 86 lines the [4Fe-4S] cluster pocket. Residues 112–114 (YVN) and serine 129 contribute to the iminosuccinate site. Cysteine 171 is a [4Fe-4S] cluster binding site. Iminosuccinate-binding positions include 197-199 (HPE) and threonine 214. Cysteine 259 is a binding site for [4Fe-4S] cluster.

It belongs to the quinolinate synthase family. Type 2 subfamily. [4Fe-4S] cluster is required as a cofactor.

The protein localises to the cytoplasm. It catalyses the reaction iminosuccinate + dihydroxyacetone phosphate = quinolinate + phosphate + 2 H2O + H(+). It functions in the pathway cofactor biosynthesis; NAD(+) biosynthesis; quinolinate from iminoaspartate: step 1/1. Its function is as follows. Catalyzes the condensation of iminoaspartate with dihydroxyacetone phosphate to form quinolinate. This Dehalococcoides mccartyi (strain ATCC BAA-2266 / KCTC 15142 / 195) (Dehalococcoides ethenogenes (strain 195)) protein is Quinolinate synthase.